A 112-amino-acid chain; its full sequence is Large ribosomal subunit protein uL18 (112 aa).

This sequence belongs to the universal ribosomal protein uL18 family. As to quaternary structure, part of the 50S ribosomal subunit; part of the 5S rRNA/L5/L18/L25 subcomplex. Contacts the 5S and 23S rRNAs.

In terms of biological role, this is one of the proteins that bind and probably mediate the attachment of the 5S RNA into the large ribosomal subunit, where it forms part of the central protuberance. The protein is Large ribosomal subunit protein uL18 of Deinococcus deserti (strain DSM 17065 / CIP 109153 / LMG 22923 / VCD115).